Reading from the N-terminus, the 102-residue chain is UPF0251 protein ASA_1331 (102 aa).

The protein belongs to the UPF0251 family.

The polypeptide is UPF0251 protein ASA_1331 (Aeromonas salmonicida (strain A449)).